The chain runs to 622 residues: Lamin Dm0 (622 aa).

The interval 1–50 (MSSKSRRAGTATPQPGNTSTPRPPSAGPQPPPPSTHSQTASSPLSPTRHS) is disordered. Residue Ser-2 is modified to N-acetylserine. Positions 2–56 (SSKSRRAGTATPQPGNTSTPRPPSAGPQPPPPSTHSQTASSPLSPTRHSRVAEKV) are head. A phosphothreonine mark is found at Thr-10, Thr-12, and Thr-20. Pro residues predominate over residues 21–34 (PRPPSAGPQPPPPS). Ser-25 and Ser-34 each carry phosphoserine. A Phosphothreonine modification is found at Thr-39. Phosphoserine is present on residues Ser-41, Ser-42, and Ser-45. Thr-47 carries the post-translational modification Phosphothreonine. An IF rod domain is found at 54–410 (EKVELQNLND…KLLVGEEARL (357 aa)). The coil 1A stretch occupies residues 55-91 (KVELQNLNDRLATYIDRVRNLETENSRLTIEVQTTRD). Positions 92 to 103 (TVTRETTNIKNI) are linker 1. Residues 104 to 241 (FEAELLETRR…QIHSQEINES (138 aa)) form a coil 1B region. Phosphoserine is present on Ser-235. The linker 2 stretch occupies residues 242 to 265 (RRIKQTEYSEIDGRLSSEYDAKLK). Tyr-249 bears the Phosphotyrosine mark. Ser-250 and Ser-311 each carry phosphoserine. Residues 266–408 (QSLQELRAQY…YDKLLVGEEA (143 aa)) form a coil 2 region. The tract at residues 409 to 619 (RLNITPATNT…GDPQQSNEKC (211 aa)) is tail. Thr-413 and Thr-435 each carry phosphothreonine. Residues 429-440 (RNSTRATPSRRT) are compositionally biased toward polar residues. The tract at residues 429 to 448 (RNSTRATPSRRTPSAAVKRK) is disordered. Ser-442 carries the post-translational modification Phosphoserine. The Nuclear localization signal motif lies at 446-451 (KRKRAV). Phosphoserine occurs at positions 455 and 459. Positions 461–588 (ADYYVSASAK…RIVSQHTSSS (128 aa)) constitute an LTD domain. Residue Ser-595 is modified to Phosphoserine. Thr-597 bears the Phosphothreonine mark. Residues 603 to 622 (EQLYHQQGDPQQSNEKCAIM) are disordered. Residues 605–622 (LYHQQGDPQQSNEKCAIM) show a composition bias toward polar residues. Position 615 is a phosphoserine (Ser-615). Cys-619 carries the post-translational modification Cysteine methyl ester. A lipid anchor (S-farnesyl cysteine) is attached at Cys-619. A propeptide spans 620-622 (AIM) (removed in mature form).

The protein belongs to the intermediate filament family. Interacts directly with LBR. Interacts with MAN1. Interacts with Ote. Post-translationally, three forms of lamin have been identified in D.melanogaster, lamin Dm0 is rapidly processed to lamin Dm1 in the cytoplasm, Dm1 is then assembled in the nuclear envelope and is then phosphorylated, forming lamin Dm2. Constitutively expressed in all tissues (at protein level). Expressed in spermatocytes (at protein level).

Its subcellular location is the nucleus. It localises to the nucleus inner membrane. It is found in the nucleus envelope. The protein localises to the nucleus lamina. The protein resides in the cytoplasm. Its subcellular location is the cytoskeleton. It localises to the spindle pole. Functionally, lamins are components of the nuclear lamina, a fibrous layer on the nucleoplasmic side of the inner nuclear membrane, which is thought to provide a framework for the nuclear envelope and may also interact with chromatin. May have a role in the localization of the LEM domain proteins Ote, bocks and MAN1 to the nuclear membrane. In spermatocytes, plays a role in maintaining type-A lamin LamC nuclear localization; regulates meiotic cytokinesis by maintaining the structure of the spindle envelope, and by contributing to the formation of the contractile ring and central spindle. Required for nuclear migration and to link the microtubule organizing center (MTOC) to the nucleus. In addition, is required for nuclear envelope localization of klar. In Drosophila melanogaster (Fruit fly), this protein is Lamin Dm0.